Consider the following 236-residue polypeptide: Leucyl/phenylalanyl-tRNA--protein transferase (236 aa).

Belongs to the L/F-transferase family.

It localises to the cytoplasm. It carries out the reaction N-terminal L-lysyl-[protein] + L-leucyl-tRNA(Leu) = N-terminal L-leucyl-L-lysyl-[protein] + tRNA(Leu) + H(+). The catalysed reaction is N-terminal L-arginyl-[protein] + L-leucyl-tRNA(Leu) = N-terminal L-leucyl-L-arginyl-[protein] + tRNA(Leu) + H(+). The enzyme catalyses L-phenylalanyl-tRNA(Phe) + an N-terminal L-alpha-aminoacyl-[protein] = an N-terminal L-phenylalanyl-L-alpha-aminoacyl-[protein] + tRNA(Phe). Functionally, functions in the N-end rule pathway of protein degradation where it conjugates Leu, Phe and, less efficiently, Met from aminoacyl-tRNAs to the N-termini of proteins containing an N-terminal arginine or lysine. This chain is Leucyl/phenylalanyl-tRNA--protein transferase, found in Shewanella halifaxensis (strain HAW-EB4).